We begin with the raw amino-acid sequence, 521 residues long: DEAD-box ATP-dependent RNA helicase 12 (521 aa).

Residues 1 to 97 (MHHPRARYPP…QQWLRRDQAT (97 aa)) are disordered. Residues 13-50 (TSGGGGGGGGGGGGGRGNGGGGFGGGGGGGGGNHGYYG) are compositionally biased toward gly residues. Low complexity predominate over residues 51–89 (RGPQPQPQQQHYHHQAQQLHQHQQQQQHAQRNSSSQQQQ). The short motif at 147–175 (NEFEDYFLKRELLMGIYEKGFERPSPIQE) is the Q motif element. The Helicase ATP-binding domain maps to 178 to 348 (IPIALTGSDI…EKYLPRPYVI (171 aa)). Position 191–198 (191–198 (AKNGTGKT)) interacts with ATP. The DEAD box signature appears at 296-299 (DEAD). The region spanning 358 to 518 (GITQYYAFVE…TIPPQIDLAV (161 aa)) is the Helicase C-terminal domain.

This sequence belongs to the DEAD box helicase family. DDX6/DHH1 subfamily.

The protein resides in the cytoplasm. Its subcellular location is the P-body. It carries out the reaction ATP + H2O = ADP + phosphate + H(+). In terms of biological role, ATP-dependent RNA helicase involved in mRNA turnover, and more specifically in mRNA decapping. The protein is DEAD-box ATP-dependent RNA helicase 12 of Oryza sativa subsp. japonica (Rice).